We begin with the raw amino-acid sequence, 218 residues long: Large ribosomal subunit protein uL3 (218 aa).

This sequence belongs to the universal ribosomal protein uL3 family. As to quaternary structure, part of the 50S ribosomal subunit. Forms a cluster with proteins L14 and L19.

Its function is as follows. One of the primary rRNA binding proteins, it binds directly near the 3'-end of the 23S rRNA, where it nucleates assembly of the 50S subunit. This is Large ribosomal subunit protein uL3 from Syntrophus aciditrophicus (strain SB).